A 221-amino-acid polypeptide reads, in one-letter code: MVKTWEEFLKQEAKQPYFIELMEAVKDARAKGNVYPTEEDMFSCFRLCPYDQVKVVILGQDPYHGPGQAHGLSFSVQKGVRIPPSLRNIYKELKTDLDIEPADHGYLAKWAEQGVLLMNTSWSVEEGKAGSHKKLGWATFTDHVLEELNNYDKPLVFILWGNHAIKAASGITNPQHLLIKGVHPSPLAASRGFFESKPFSKTNAFLEEHGRKPIDWDLNEQ.

Residue aspartate 61 is the Proton acceptor of the active site.

It belongs to the uracil-DNA glycosylase (UDG) superfamily. UNG family.

It localises to the cytoplasm. It carries out the reaction Hydrolyzes single-stranded DNA or mismatched double-stranded DNA and polynucleotides, releasing free uracil.. Functionally, excises uracil residues from the DNA which can arise as a result of misincorporation of dUMP residues by DNA polymerase or due to deamination of cytosine. The protein is Uracil-DNA glycosylase 1 of Listeria monocytogenes serotype 4b (strain F2365).